The sequence spans 286 residues: Pantothenate synthetase (286 aa).

30 to 37 (MGNLHAGH) provides a ligand contact to ATP. Catalysis depends on H37, which acts as the Proton donor. (R)-pantoate is bound at residue Q61. A beta-alanine-binding site is contributed by Q61. Residue 149–152 (GQKD) participates in ATP binding. (R)-pantoate is bound at residue Q155. ATP-binding positions include V178 and 186–189 (LSSR).

The protein belongs to the pantothenate synthetase family. Homodimer.

The protein localises to the cytoplasm. The catalysed reaction is (R)-pantoate + beta-alanine + ATP = (R)-pantothenate + AMP + diphosphate + H(+). The protein operates within cofactor biosynthesis; (R)-pantothenate biosynthesis; (R)-pantothenate from (R)-pantoate and beta-alanine: step 1/1. Functionally, catalyzes the condensation of pantoate with beta-alanine in an ATP-dependent reaction via a pantoyl-adenylate intermediate. The chain is Pantothenate synthetase from Stutzerimonas stutzeri (strain A1501) (Pseudomonas stutzeri).